Reading from the N-terminus, the 600-residue chain is FERM domain-containing protein 3 (600 aa).

The 281-residue stretch at 31–311 (MRCTIRLLDD…ENQAFYKYAK (281 aa)) folds into the FERM domain. Residues 413 to 440 (SAPVLGNSPARGLETTADVTHDEEESIR) are disordered. A helical membrane pass occupies residues 534 to 554 (LLLAAIGLLMVVLPLLLILLE).

The protein resides in the membrane. The chain is FERM domain-containing protein 3 (frmd3) from Xenopus tropicalis (Western clawed frog).